A 517-amino-acid chain; its full sequence is ATP synthase subunit alpha 2 (517 aa).

ATP is bound at residue 173 to 180 (GDRQTGKT).

This sequence belongs to the ATPase alpha/beta chains family. As to quaternary structure, F-type ATPases have 2 components, CF(1) - the catalytic core - and CF(0) - the membrane proton channel. CF(1) has five subunits: alpha(3), beta(3), gamma(1), delta(1), epsilon(1). CF(0) has three main subunits: a(1), b(2) and c(9-12). The alpha and beta chains form an alternating ring which encloses part of the gamma chain. CF(1) is attached to CF(0) by a central stalk formed by the gamma and epsilon chains, while a peripheral stalk is formed by the delta and b chains.

The protein localises to the cell inner membrane. It carries out the reaction ATP + H2O + 4 H(+)(in) = ADP + phosphate + 5 H(+)(out). Produces ATP from ADP in the presence of a proton gradient across the membrane. The alpha chain is a regulatory subunit. This is ATP synthase subunit alpha 2 from Legionella pneumophila subsp. pneumophila (strain Philadelphia 1 / ATCC 33152 / DSM 7513).